A 138-amino-acid polypeptide reads, in one-letter code: Basic phospholipase A2 Bs-N6 (138 aa).

The signal sequence occupies residues 1 to 16 (MRTLWIVAVLLVGVEG). 7 cysteine pairs are disulfide-bonded: cysteine 42–cysteine 131, cysteine 44–cysteine 60, cysteine 59–cysteine 111, cysteine 65–cysteine 138, cysteine 66–cysteine 104, cysteine 73–cysteine 97, and cysteine 91–cysteine 102. Ca(2+) is bound by residues tyrosine 43, glycine 45, and glycine 47. Histidine 63 is a catalytic residue. Aspartate 64 provides a ligand contact to Ca(2+). Aspartate 105 is an active-site residue.

In terms of assembly, monomer. Ca(2+) serves as cofactor. Contains 7 disulfide bonds. Expressed by the venom gland.

The protein resides in the secreted. The enzyme catalyses a 1,2-diacyl-sn-glycero-3-phosphocholine + H2O = a 1-acyl-sn-glycero-3-phosphocholine + a fatty acid + H(+). Snake venom phospholipase A2 (PLA2) that shows myotoxic activities. PLA2 catalyzes the calcium-dependent hydrolysis of the 2-acyl groups in 3-sn-phosphoglycerides. In Bothriechis schlegelii (Eyelash palm pitviper), this protein is Basic phospholipase A2 Bs-N6.